We begin with the raw amino-acid sequence, 607 residues long: Elongation factor 4 (607 aa).

Residues K11–S193 enclose the tr-type G domain. GTP contacts are provided by residues D23 to T28 and N140 to D143.

This sequence belongs to the TRAFAC class translation factor GTPase superfamily. Classic translation factor GTPase family. LepA subfamily.

Its subcellular location is the cell membrane. It carries out the reaction GTP + H2O = GDP + phosphate + H(+). In terms of biological role, required for accurate and efficient protein synthesis under certain stress conditions. May act as a fidelity factor of the translation reaction, by catalyzing a one-codon backward translocation of tRNAs on improperly translocated ribosomes. Back-translocation proceeds from a post-translocation (POST) complex to a pre-translocation (PRE) complex, thus giving elongation factor G a second chance to translocate the tRNAs correctly. Binds to ribosomes in a GTP-dependent manner. In Staphylococcus carnosus (strain TM300), this protein is Elongation factor 4.